The primary structure comprises 188 residues: Protein GrpE (188 aa).

The disordered stretch occupies residues 1–30 (MTKKTSHHKAEQKEKRAGEESGRESEVLDH). Over residues 8-30 (HKAEQKEKRAGEESGRESEVLDH) the composition is skewed to basic and acidic residues.

It belongs to the GrpE family. In terms of assembly, homodimer.

The protein resides in the cytoplasm. In terms of biological role, participates actively in the response to hyperosmotic and heat shock by preventing the aggregation of stress-denatured proteins, in association with DnaK and GrpE. It is the nucleotide exchange factor for DnaK and may function as a thermosensor. Unfolded proteins bind initially to DnaJ; upon interaction with the DnaJ-bound protein, DnaK hydrolyzes its bound ATP, resulting in the formation of a stable complex. GrpE releases ADP from DnaK; ATP binding to DnaK triggers the release of the substrate protein, thus completing the reaction cycle. Several rounds of ATP-dependent interactions between DnaJ, DnaK and GrpE are required for fully efficient folding. The chain is Protein GrpE from Chlorobium phaeobacteroides (strain BS1).